Reading from the N-terminus, the 311-residue chain is Olfactory receptor 1L4 (311 aa).

Residues 1 to 26 (METKNYSSSTSGFILLGLSSNPKLQK) lie on the Extracellular side of the membrane. An N-linked (GlcNAc...) asparagine glycan is attached at Asn5. Residues 27–50 (PLFAIFLIMYLLTAVGNVLIILAI) traverse the membrane as a helical segment. Topologically, residues 51 to 58 (YSDPRLHT) are cytoplasmic. Residues 59–80 (PMYFFLSNLSFMDICFTTVIVP) traverse the membrane as a helical segment. Residues 81–101 (KMLVNFLSETKIISYVGCLIQ) lie on the Extracellular side of the membrane. A disulfide bridge connects residues Cys98 and Cys190. The helical transmembrane segment at 102–121 (MYFFMAFGNTDSYLLASMAI) threads the bilayer. Residues 122–140 (DRLVAICNPLHYDVVMKPW) lie on the Cytoplasmic side of the membrane. Residues 141–159 (HCLLMLLGSCSISHLHSLF) form a helical membrane-spanning segment. The Extracellular segment spans residues 160–197 (RVLLMSRLSFCASHIIKHFFCDTQPVLKLSCSDTSSSQ). The chain crosses the membrane as a helical span at residues 198–220 (MVVMTETLAVIVTPFLCTIFSYL). The Cytoplasmic portion of the chain corresponds to 221 to 237 (QIIVTVLRIPSAAGKWK). Residues 238-260 (AFSTCGSHLTVVVLFYGSVIYVY) traverse the membrane as a helical segment. At 261-273 (FRPLSMYSVMKGR) the chain is on the extracellular side. Residues 274 to 293 (VATVMYTVVTPMLNPFIYSL) form a helical membrane-spanning segment. Residues 294-311 (RNKDMKRGLKKLRHRIYS) lie on the Cytoplasmic side of the membrane.

It belongs to the G-protein coupled receptor 1 family.

The protein localises to the cell membrane. Odorant receptor. This Homo sapiens (Human) protein is Olfactory receptor 1L4 (OR1L4).